The sequence spans 385 residues: NADH-quinone oxidoreductase subunit D 2 (385 aa).

This sequence belongs to the complex I 49 kDa subunit family. As to quaternary structure, NDH-1 is composed of 14 different subunits. Subunits NuoB, C, D, E, F, and G constitute the peripheral sector of the complex.

It is found in the cell membrane. It catalyses the reaction a quinone + NADH + 5 H(+)(in) = a quinol + NAD(+) + 4 H(+)(out). In terms of biological role, NDH-1 shuttles electrons from NADH, via FMN and iron-sulfur (Fe-S) centers, to quinones in the respiratory chain. The immediate electron acceptor for the enzyme in this species is believed to be a menaquinone. Couples the redox reaction to proton translocation (for every two electrons transferred, four hydrogen ions are translocated across the cytoplasmic membrane), and thus conserves the redox energy in a proton gradient. This chain is NADH-quinone oxidoreductase subunit D 2, found in Salinispora arenicola (strain CNS-205).